We begin with the raw amino-acid sequence, 251 residues long: tRNA pseudouridine synthase A (251 aa).

Asp26 acts as the Nucleophile in catalysis. Tyr98 serves as a coordination point for substrate.

Belongs to the tRNA pseudouridine synthase TruA family. In terms of assembly, homodimer.

It carries out the reaction uridine(38/39/40) in tRNA = pseudouridine(38/39/40) in tRNA. Its function is as follows. Formation of pseudouridine at positions 38, 39 and 40 in the anticodon stem and loop of transfer RNAs. The polypeptide is tRNA pseudouridine synthase A (Mycolicibacterium paratuberculosis (strain ATCC BAA-968 / K-10) (Mycobacterium paratuberculosis)).